Here is a 259-residue protein sequence, read N- to C-terminus: Histidinol-phosphatase (259 aa).

E66, D82, I84, D85, and D207 together coordinate Mg(2+). Position 66 (E66) interacts with substrate. Residues 84–87 (IDGT) and D207 contribute to the substrate site.

It belongs to the inositol monophosphatase superfamily. It depends on Mg(2+) as a cofactor.

The enzyme catalyses L-histidinol phosphate + H2O = L-histidinol + phosphate. It participates in amino-acid biosynthesis; L-histidine biosynthesis; L-histidine from 5-phospho-alpha-D-ribose 1-diphosphate: step 8/9. Its function is as follows. Catalyzes the dephosphorylation of histidinol-phosphate to histidinol, the direct precursor of histidine. This is Histidinol-phosphatase (hisN) from Chlorobaculum parvum (strain DSM 263 / NCIMB 8327) (Chlorobium vibrioforme subsp. thiosulfatophilum).